The primary structure comprises 297 residues: Transmembrane protein 169 (297 aa).

The disordered stretch occupies residues 1 to 88 (MEESAPVESQ…EGEDFLDYPG (88 aa)). Over 1–159 (MEESAPVESQ…CQVGADQGPH (159 aa)) the chain is Extracellular. The segment covering 22–31 (RRAVAAVLAL) has biased composition (low complexity). Acidic residues-rich tracts occupy residues 61–70 (KTDEEPEESE) and 78–88 (EEGEDFLDYPG). A helical transmembrane segment spans residues 160–180 (VVLWTLVCLPVVFVLSFVVSF). Over 181–210 (YYGTITWYNIFLVYNEERTFWHKISCCPCL) the chain is Cytoplasmic. A helical transmembrane segment spans residues 211 to 231 (ILFYPVLIMTMASSLGLYAAV). Topologically, residues 232–297 (AQLSWSWAAW…PIQEVETSTV (66 aa)) are extracellular.

It is found in the membrane. The protein is Transmembrane protein 169 (Tmem169) of Mus musculus (Mouse).